We begin with the raw amino-acid sequence, 129 residues long: Small ribosomal subunit protein uS11 (129 aa).

The protein belongs to the universal ribosomal protein uS11 family. Part of the 30S ribosomal subunit. Interacts with proteins S7 and S18. Binds to IF-3.

Located on the platform of the 30S subunit, it bridges several disparate RNA helices of the 16S rRNA. Forms part of the Shine-Dalgarno cleft in the 70S ribosome. This Mycoplasma mycoides subsp. mycoides SC (strain CCUG 32753 / NCTC 10114 / PG1) protein is Small ribosomal subunit protein uS11.